The following is a 316-amino-acid chain: tRNA dimethylallyltransferase (316 aa).

Residue 17 to 24 (GPTASGKT) participates in ATP binding. 19 to 24 (TASGKT) is a binding site for substrate. Interaction with substrate tRNA regions lie at residues 42–45 (DSAL), 166–170 (QRLSR), and 247–252 (RCVGYR).

It belongs to the IPP transferase family. In terms of assembly, monomer. Mg(2+) is required as a cofactor.

The catalysed reaction is adenosine(37) in tRNA + dimethylallyl diphosphate = N(6)-dimethylallyladenosine(37) in tRNA + diphosphate. In terms of biological role, catalyzes the transfer of a dimethylallyl group onto the adenine at position 37 in tRNAs that read codons beginning with uridine, leading to the formation of N6-(dimethylallyl)adenosine (i(6)A). The chain is tRNA dimethylallyltransferase from Salmonella schwarzengrund (strain CVM19633).